A 445-amino-acid chain; its full sequence is tRNA-2-methylthio-N(6)-dimethylallyladenosine synthase (445 aa).

Positions 7 to 121 constitute an MTTase N-terminal domain; the sequence is KTFYIETFGC…LPEMLVQLEA (115 aa). [4Fe-4S] cluster is bound by residues Cys16, Cys52, Cys84, Cys158, Cys162, and Cys165. One can recognise a Radical SAM core domain in the interval 144–374; sequence RDNPHRAYLT…QEKQRAIQIR (231 aa). One can recognise a TRAM domain in the interval 377–443; sequence AEMIGSIQEV…PNSLVGESAA (67 aa).

The protein belongs to the methylthiotransferase family. MiaB subfamily. Monomer. It depends on [4Fe-4S] cluster as a cofactor.

It is found in the cytoplasm. It catalyses the reaction N(6)-dimethylallyladenosine(37) in tRNA + (sulfur carrier)-SH + AH2 + 2 S-adenosyl-L-methionine = 2-methylsulfanyl-N(6)-dimethylallyladenosine(37) in tRNA + (sulfur carrier)-H + 5'-deoxyadenosine + L-methionine + A + S-adenosyl-L-homocysteine + 2 H(+). Catalyzes the methylthiolation of N6-(dimethylallyl)adenosine (i(6)A), leading to the formation of 2-methylthio-N6-(dimethylallyl)adenosine (ms(2)i(6)A) at position 37 in tRNAs that read codons beginning with uridine. This Solibacter usitatus (strain Ellin6076) protein is tRNA-2-methylthio-N(6)-dimethylallyladenosine synthase.